A 201-amino-acid polypeptide reads, in one-letter code: Small ribosomal subunit protein uS4 (201 aa).

Positions 91 to 151 constitute an S4 RNA-binding domain; sequence ARLDNVIYRA…DRSRSMLWFD (61 aa).

Belongs to the universal ribosomal protein uS4 family. Part of the 30S ribosomal subunit. Contacts protein S5. The interaction surface between S4 and S5 is involved in control of translational fidelity.

In terms of biological role, one of the primary rRNA binding proteins, it binds directly to 16S rRNA where it nucleates assembly of the body of the 30S subunit. Its function is as follows. With S5 and S12 plays an important role in translational accuracy. The chain is Small ribosomal subunit protein uS4 from Corynebacterium urealyticum (strain ATCC 43042 / DSM 7109).